The primary structure comprises 513 residues: ATP synthase subunit alpha 2 (513 aa).

169-176 contacts ATP; it reads GDRQTGKT.

This sequence belongs to the ATPase alpha/beta chains family. In terms of assembly, F-type ATPases have 2 components, CF(1) - the catalytic core - and CF(0) - the membrane proton channel. CF(1) has five subunits: alpha(3), beta(3), gamma(1), delta(1), epsilon(1). CF(0) has three main subunits: a(1), b(2) and c(9-12). The alpha and beta chains form an alternating ring which encloses part of the gamma chain. CF(1) is attached to CF(0) by a central stalk formed by the gamma and epsilon chains, while a peripheral stalk is formed by the delta and b chains.

The protein resides in the cell inner membrane. It catalyses the reaction ATP + H2O + 4 H(+)(in) = ADP + phosphate + 5 H(+)(out). Produces ATP from ADP in the presence of a proton gradient across the membrane. The alpha chain is a regulatory subunit. The sequence is that of ATP synthase subunit alpha 2 from Shewanella frigidimarina (strain NCIMB 400).